A 304-amino-acid polypeptide reads, in one-letter code: dTDP-4-dehydrorhamnose reductase (304 aa).

NADH contacts are provided by residues 15–17 (GQL), 41–42 (DI), and 63–65 (AYT). Residues 16–17 (QL), 41–42 (DI), and 63–65 (AYT) contribute to the NADPH site. A dTDP-beta-L-rhamnose-binding site is contributed by 104-105 (TD). Positions 132 and 136 each coordinate NADH. NADPH-binding residues include Tyr132 and Lys136. Tyr132 acts as the Proton donor/acceptor in catalysis. Trp157 provides a ligand contact to dTDP-beta-L-rhamnose.

The protein belongs to the dTDP-4-dehydrorhamnose reductase family. The cofactor is Mg(2+).

The catalysed reaction is dTDP-beta-L-rhamnose + NADP(+) = dTDP-4-dehydro-beta-L-rhamnose + NADPH + H(+). The protein operates within carbohydrate biosynthesis; dTDP-L-rhamnose biosynthesis. In terms of biological role, involved in the biosynthesis of the dTDP-L-rhamnose which is a component of the critical linker, D-N-acetylglucosamine-L-rhamnose disaccharide, which connects the galactan region of arabinogalactan to peptidoglycan via a phosphodiester linkage. Catalyzes the reduction of dTDP-6-deoxy-L-lyxo-4-hexulose to yield dTDP-L-rhamnose. In Mycobacterium tuberculosis (strain CDC 1551 / Oshkosh), this protein is dTDP-4-dehydrorhamnose reductase.